The following is a 162-amino-acid chain: uncharacterized protein (162 aa).

An N-terminal signal peptide occupies residues 1–18 (MRKTFLTLLCVSSAIAHA).

It belongs to the fimbrial protein family.

In terms of biological role, part of the yfcOPQRSUV fimbrial operon. Could contribute to adhesion to various surfaces in specific environmental niches. Increases adhesion to eukaryotic T24 bladder epithelial cells in the absence of fim genes. This is an uncharacterized protein from Escherichia coli (strain K12).